The chain runs to 727 residues: 1,4-alpha-glucan branching enzyme GlgB (727 aa).

Asp405 serves as the catalytic Nucleophile. Glu458 functions as the Proton donor in the catalytic mechanism.

This sequence belongs to the glycosyl hydrolase 13 family. GlgB subfamily. In terms of assembly, monomer.

The catalysed reaction is Transfers a segment of a (1-&gt;4)-alpha-D-glucan chain to a primary hydroxy group in a similar glucan chain.. It functions in the pathway glycan biosynthesis; glycogen biosynthesis. Catalyzes the formation of the alpha-1,6-glucosidic linkages in glycogen by scission of a 1,4-alpha-linked oligosaccharide from growing alpha-1,4-glucan chains and the subsequent attachment of the oligosaccharide to the alpha-1,6 position. This chain is 1,4-alpha-glucan branching enzyme GlgB, found in Yersinia enterocolitica serotype O:8 / biotype 1B (strain NCTC 13174 / 8081).